Reading from the N-terminus, the 219-residue chain is Probable N-acetyltransferase camello (219 aa).

Helical transmembrane passes span 42–62 and 64–84; these read FYFI…SYVL and LTSL…EFHG. Residues 62 to 218 form the N-acetyltransferase domain; that stretch reads LSLTSLVALL…TVIYYRYDIK (157 aa).

This sequence belongs to the camello family. As to expression, at the beginning of gastrulation, expressed in deep cells of the presumptive mesoderm. At later gastrulation stages, expressed at the interface between already involuted and preinvoluted mesoderm. At late neurula and tailbud stages, expressed in the deep mass of cells lying ventrally and laterally to the closed blastopore.

It localises to the golgi apparatus membrane. Its function is as follows. Plays a role in regulation of gastrulation, possibly by controlled reduction of cell adhesion which is necessary for optimal cell motility. This Xenopus laevis (African clawed frog) protein is Probable N-acetyltransferase camello.